Consider the following 455-residue polypeptide: Bifunctional protein GlmU (455 aa).

The tract at residues 1–229 (MLNSAMSVVI…ISETEGVNNR (229 aa)) is pyrophosphorylase. UDP-N-acetyl-alpha-D-glucosamine-binding positions include 11-14 (LAAG), K25, Q76, 81-82 (GT), 103-105 (YGD), G140, E154, N169, and N227. D105 lines the Mg(2+) pocket. N227 provides a ligand contact to Mg(2+). The interval 230–250 (LQLSRLERIYQAEQAEKLLLA) is linker. Residues 251–455 (GVMLRDPARF…KQGWQRPVKK (205 aa)) are N-acetyltransferase. UDP-N-acetyl-alpha-D-glucosamine contacts are provided by R333 and K351. The active-site Proton acceptor is H363. 2 residues coordinate UDP-N-acetyl-alpha-D-glucosamine: Y366 and N377. Acetyl-CoA-binding positions include A380, 386–387 (NY), S405, A423, and R440.

In the N-terminal section; belongs to the N-acetylglucosamine-1-phosphate uridyltransferase family. This sequence in the C-terminal section; belongs to the transferase hexapeptide repeat family. In terms of assembly, homotrimer. Mg(2+) serves as cofactor.

Its subcellular location is the cytoplasm. The catalysed reaction is alpha-D-glucosamine 1-phosphate + acetyl-CoA = N-acetyl-alpha-D-glucosamine 1-phosphate + CoA + H(+). It carries out the reaction N-acetyl-alpha-D-glucosamine 1-phosphate + UTP + H(+) = UDP-N-acetyl-alpha-D-glucosamine + diphosphate. It functions in the pathway nucleotide-sugar biosynthesis; UDP-N-acetyl-alpha-D-glucosamine biosynthesis; N-acetyl-alpha-D-glucosamine 1-phosphate from alpha-D-glucosamine 6-phosphate (route II): step 2/2. Its pathway is nucleotide-sugar biosynthesis; UDP-N-acetyl-alpha-D-glucosamine biosynthesis; UDP-N-acetyl-alpha-D-glucosamine from N-acetyl-alpha-D-glucosamine 1-phosphate: step 1/1. The protein operates within bacterial outer membrane biogenesis; LPS lipid A biosynthesis. Functionally, catalyzes the last two sequential reactions in the de novo biosynthetic pathway for UDP-N-acetylglucosamine (UDP-GlcNAc). The C-terminal domain catalyzes the transfer of acetyl group from acetyl coenzyme A to glucosamine-1-phosphate (GlcN-1-P) to produce N-acetylglucosamine-1-phosphate (GlcNAc-1-P), which is converted into UDP-GlcNAc by the transfer of uridine 5-monophosphate (from uridine 5-triphosphate), a reaction catalyzed by the N-terminal domain. In Salmonella arizonae (strain ATCC BAA-731 / CDC346-86 / RSK2980), this protein is Bifunctional protein GlmU.